A 1709-amino-acid polypeptide reads, in one-letter code: Intraflagellar transport protein 122 (1709 aa).

WD repeat units follow at residues 51 to 89 (TQHP…ALFK) and 132 to 171 (SFKG…LNSC). The tract at residues 209-229 (TIPQTVTPSASASGRSGSGKR) is disordered. Residues 634 to 673 (LHRSPIVSLDISPDRKYISVVDRSDVVSVYKFLDDSEIVL) form a WD 3 repeat. The LRR 1 repeat unit spans residues 1231 to 1256 (IEALERLRLSGNTSKEAIIIKQLIDA). Residues 1378–1404 (LSGEDTVKASSQRSKKDNPPSLRSTIG) form a disordered region. The LRR 2 repeat unit spans residues 1414 to 1436 (LGSLAHIDLGINNMNIPPGISEL).

It localises to the cell projection. It is found in the cilium. The protein localises to the flagellum. Its subcellular location is the cytoplasm. The protein resides in the cytoskeleton. It localises to the flagellum axoneme. It is found in the flagellum basal body. In terms of biological role, component of the intraflagellar transport complex A (IFT-A) involved in flagellar assembly. The chain is Intraflagellar transport protein 122 from Giardia intestinalis (strain ATCC 50803 / WB clone C6) (Giardia lamblia).